A 542-amino-acid chain; its full sequence is Sensory neuron membrane protein 2 (542 aa).

Residues 1 to 487 lie on the Extracellular side of the membrane; that stretch reads MMVMNTELRQ…MKVLTLLDIV (487 aa). 4 N-linked (GlcNAc...) asparagine glycosylation sites follow: N33, N128, N238, and N274. 3 disulfide bridges follow: C283/C351, C312/C378, and C353/C367. A helical membrane pass occupies residues 488–508; that stretch reads QWVMIGSGLLLAIIMPIVYFI. Over 509–542 the chain is Cytoplasmic; it reads KRRPSSGSITPTLTTTTSTVSISDGGGLGGNPQK.

It belongs to the CD36 family. As to expression, detected in the antenna, legs and wings. Higher levels of expression detected in male compared to female.

It is found in the cell membrane. In terms of biological role, plays an olfactory role that is not restricted to pheromone sensitivity. The sequence is that of Sensory neuron membrane protein 2 from Aedes aegypti (Yellowfever mosquito).